Here is a 564-residue protein sequence, read N- to C-terminus: Centrosomal protein kizuna (564 aa).

Residues methionine 1–glutamine 21 form a disordered region. A coiled-coil region spans residues arginine 28 to serine 50. Disordered stretches follow at residues glutamine 178 to alanine 201, threonine 304 to proline 345, glutamate 442 to serine 465, isoleucine 487 to phenylalanine 519, and alanine 531 to aspartate 564. Over residues glutamine 313 to serine 324 the composition is skewed to low complexity. The span at serine 447–asparagine 463 shows a compositional bias: polar residues. Residues glutamate 493–phenylalanine 519 show a composition bias toward basic and acidic residues.

The protein belongs to the kizuna family.

The protein localises to the cytoplasm. It is found in the cytoskeleton. It localises to the microtubule organizing center. Its subcellular location is the centrosome. The protein resides in the cilium basal body. Centrosomal protein required for establishing a robust mitotic centrosome architecture that can endure the forces that converge on the centrosomes during spindle formation. Required for stabilizing the expanded pericentriolar material around the centriole. This chain is Centrosomal protein kizuna (KIZ), found in Gallus gallus (Chicken).